Reading from the N-terminus, the 387-residue chain is MDVTTSAWSETTRRISEPSTLQGTLGSLDKAEDHSSSIFSGFAALLAILLVVAVICVLWCCGKRKKRQVPYLRVTIMPLLTLPRPRQRAKNIYDLLPRRQEELGRHPSRSIRIVSTESLLSRNSDSPSSEHVPSRAGDALHMHRAHTHAMGYAVGIYDNAMRPQMCGNLAPSPHYVNVRASRGSPSTSSEDSRDYVNIPTAKEIAETLASASNPPRNLFILPGTKELAPSEEIDEGCGNASDCTSLGSPGTENSDPLSDGEGSSQTSNDYVNMAELDLGTPQGKQLQGMFQCRRDYENVPPGPSSNKQQEEEVTSSNTDHVEGRTDGPETHTPPAVQSGSFLALKDHVACQSSAHSETGPWEDAEETSSEDSHDYENVCAAEAGARG.

The Extracellular portion of the chain corresponds to Met-1 to Ser-37. Residues Ile-38–Leu-58 form a helical; Signal-anchor for type III membrane protein membrane-spanning segment. At Trp-59 to Gly-387 the chain is on the cytoplasmic side. A disordered region spans residues Val-114–Ala-136. Over residues Ser-118–Ser-129 the composition is skewed to low complexity. Tyr-195 is subject to Phosphotyrosine. Residues Ser-230 to Asn-268 form a disordered region. Polar residues predominate over residues Ser-241 to Asn-268. Tyr-270 and Tyr-296 each carry phosphotyrosine. Residues Arg-294–Gly-387 form a disordered region. Positions Asp-319–Glu-329 are enriched in basic and acidic residues. The segment covering Pro-360–Ser-369 has biased composition (acidic residues). A Phosphotyrosine modification is found at Tyr-375.

In terms of assembly, when phosphorylated, interacts with GRB2, PIK3R1 and GRAP2. Post-translationally, phosphorylated on tyrosines upon TCR or BCR activation; which leads to the recruitment of GRB2, PIK3R1 and GRAP2.

The protein localises to the cell membrane. Negatively regulates TCR (T-cell antigen receptor)-mediated signaling in T-cells and BCR (B-cell antigen receptor)-mediated signaling in B-cells. The polypeptide is Lymphocyte transmembrane adapter 1 (LAX1) (Bos taurus (Bovine)).